An 868-amino-acid polypeptide reads, in one-letter code: Envelope glycoprotein gp160 (868 aa).

Residues 1–33 (MAMRAKGIRKNCQHLWRWGTMLLGMLMICSAAA) form the signal peptide. The Extracellular segment spans residues 34–696 (NLWVTVYYGV…ITKWLWYIKI (663 aa)). C55 and C75 are joined by a disulfide. Residues N89, N131, N138, N139, N142, N162, N166, N195, N198, N208, N245, N252, N273, N287, N300, N306, N312, N342, N349, N365, and N371 are each glycosylated (N-linked (GlcNAc...) asparagine; by host). Intrachain disulfides connect C120/C216, C127/C207, C132/C163, C229/C258, and C239/C250. A V1 region spans residues 132 to 162 (CTDLNTNNTTNTTELSIIVVWEQRGKGEMRN). The V2 stretch occupies residues 163–207 (CSFNITTSIRDKVQREYALFYKLDVEPIDDNKNTTNNTKYRLINC). The V3 stretch occupies residues 307–340 (CTRPNNHTRKRVTLGPGRVWYTTGEILGNIRQAH). A disulfide bridge links C307 with C341. The interval 373 to 383 (SSGGDPEIVMH) is CD4-binding loop. 2 cysteine pairs are disulfide-bonded: C387/C456 and C394/C429. The tract at residues 394 to 429 (CNSTQLFNSAWNVTSNGTWSVTRKQKDTGDIITLPC) is V4. N-linked (GlcNAc...) asparagine; by host glycans are attached at residues N395, N405, N409, N459, and N473. V5 regions lie at residues 472-482 (ENQTTEIFRPG) and 474-482 (QTTEIFRPG). The tract at residues 523-544 (AVGMLGAMFLGFLGAAGSTMGA) is fusion peptide. The immunosuppression stretch occupies residues 586 to 604 (KQLQARILAVERYLKDQQL). C610 and C616 are joined by a disulfide. 4 N-linked (GlcNAc...) asparagine; by host glycosylation sites follow: N623, N628, N637, and N649. Residues 645-679 (REIDNYTHLIYTLIEESQNQQEKNQQELLQLDKWA) adopt a coiled-coil conformation. The interval 674 to 695 (QLDKWASLWTWSDITKWLWYIK) is MPER; binding to GalCer. The chain crosses the membrane as a helical span at residues 697–717 (FIMIVGGLIGLRIVFAVLSIV). The Cytoplasmic portion of the chain corresponds to 718–868 (NRVRQGYSPL…IRQGFERALL (151 aa)). The short motif at 724–727 (YSPL) is the YXXL motif; contains endocytosis signal element. Positions 731-755 (TLLPNPRGPDRPEGTEEGGGERGRD) are disordered. The span at 738–755 (GPDRPEGTEEGGGERGRD) shows a compositional bias: basic and acidic residues. C776 carries the S-palmitoyl cysteine; by host lipid modification. The Di-leucine internalization motif signature appears at 867 to 868 (LL).

Belongs to the HIV-1 env protein family. As to quaternary structure, the mature envelope protein (Env) consists of a homotrimer of non-covalently associated gp120-gp41 heterodimers. The resulting complex protrudes from the virus surface as a spike. There seems to be as few as 10 spikes on the average virion. Interacts with host CD4, CCR5 and CXCR4. Gp120 also interacts with the C-type lectins CD209/DC-SIGN and CLEC4M/DC-SIGNR (collectively referred to as DC-SIGN(R)). Gp120 and gp41 interact with GalCer. Gp120 interacts with host ITGA4/ITGB7 complex; on CD4+ T-cells, this interaction results in rapid activation of integrin ITGAL/LFA-1, which facilitates efficient cell-to-cell spreading of HIV-1. Gp120 interacts with cell-associated heparan sulfate; this interaction increases virus infectivity on permissive cells and may be involved in infection of CD4- cells. The mature envelope protein (Env) consists of a homotrimer of non-covalently associated gp120-gp41 heterodimers. The resulting complex protrudes from the virus surface as a spike. There seems to be as few as 10 spikes on the average virion. Post-translationally, highly glycosylated by host. The high number of glycan on the protein is reffered to as 'glycan shield' because it contributes to hide protein sequence from adaptive immune system. Palmitoylation of the transmembrane protein and of Env polyprotein (prior to its proteolytic cleavage) is essential for their association with host cell membrane lipid rafts. Palmitoylation is therefore required for envelope trafficking to classical lipid rafts, but not for viral replication. In terms of processing, specific enzymatic cleavages in vivo yield mature proteins. Envelope glycoproteins are synthesized as an inactive precursor that is heavily N-glycosylated and processed likely by host cell furin in the Golgi to yield the mature SU and TM proteins. The cleavage site between SU and TM requires the minimal sequence [KR]-X-[KR]-R. About 2 of the 9 disulfide bonds of gp41 are reduced by P4HB/PDI, following binding to CD4 receptor.

The protein resides in the virion membrane. Its subcellular location is the host cell membrane. The protein localises to the host endosome membrane. Its function is as follows. Oligomerizes in the host endoplasmic reticulum into predominantly trimers. In a second time, gp160 transits in the host Golgi, where glycosylation is completed. The precursor is then proteolytically cleaved in the trans-Golgi and thereby activated by cellular furin or furin-like proteases to produce gp120 and gp41. Attaches the virus to the host lymphoid cell by binding to the primary receptor CD4. This interaction induces a structural rearrangement creating a high affinity binding site for a chemokine coreceptor like CXCR4 and/or CCR5. Acts as a ligand for CD209/DC-SIGN and CLEC4M/DC-SIGNR, which are respectively found on dendritic cells (DCs), and on endothelial cells of liver sinusoids and lymph node sinuses. These interactions allow capture of viral particles at mucosal surfaces by these cells and subsequent transmission to permissive cells. HIV subverts the migration properties of dendritic cells to gain access to CD4+ T-cells in lymph nodes. Virus transmission to permissive T-cells occurs either in trans (without DCs infection, through viral capture and transmission), or in cis (following DCs productive infection, through the usual CD4-gp120 interaction), thereby inducing a robust infection. In trans infection, bound virions remain infectious over days and it is proposed that they are not degraded, but protected in non-lysosomal acidic organelles within the DCs close to the cell membrane thus contributing to the viral infectious potential during DCs' migration from the periphery to the lymphoid tissues. On arrival at lymphoid tissues, intact virions recycle back to DCs' cell surface allowing virus transmission to CD4+ T-cells. In terms of biological role, acts as a class I viral fusion protein. Under the current model, the protein has at least 3 conformational states: pre-fusion native state, pre-hairpin intermediate state, and post-fusion hairpin state. During fusion of viral and target intracellular membranes, the coiled coil regions (heptad repeats) assume a trimer-of-hairpins structure, positioning the fusion peptide in close proximity to the C-terminal region of the ectodomain. The formation of this structure appears to drive apposition and subsequent fusion of viral and target cell membranes. Complete fusion occurs in host cell endosomes and is dynamin-dependent, however some lipid transfer might occur at the plasma membrane. The virus undergoes clathrin-dependent internalization long before endosomal fusion, thus minimizing the surface exposure of conserved viral epitopes during fusion and reducing the efficacy of inhibitors targeting these epitopes. Membranes fusion leads to delivery of the nucleocapsid into the cytoplasm. The chain is Envelope glycoprotein gp160 from Human immunodeficiency virus type 1 group M subtype B (isolate CDC-451) (HIV-1).